A 466-amino-acid polypeptide reads, in one-letter code: Adenosylhomocysteinase (466 aa).

Substrate is bound by residues threonine 57, aspartate 132, and glutamate 192. NAD(+) is bound at residue 193 to 195; it reads TTT. The substrate site is built by lysine 222 and aspartate 226. NAD(+)-binding positions include asparagine 227, 256–261, glutamate 279, asparagine 314, 335–337, and asparagine 380; these read GYGDVG and IGH.

It belongs to the adenosylhomocysteinase family. It depends on NAD(+) as a cofactor.

It is found in the cytoplasm. The enzyme catalyses S-adenosyl-L-homocysteine + H2O = L-homocysteine + adenosine. It functions in the pathway amino-acid biosynthesis; L-homocysteine biosynthesis; L-homocysteine from S-adenosyl-L-homocysteine: step 1/1. Its function is as follows. May play a key role in the regulation of the intracellular concentration of adenosylhomocysteine. The protein is Adenosylhomocysteinase of Sinorhizobium medicae (strain WSM419) (Ensifer medicae).